Here is a 999-residue protein sequence, read N- to C-terminus: Probable metabotropic glutamate receptor mgl-1 (999 aa).

Residues serine 202, alanine 223–threonine 225, tyrosine 273, glutamate 363, and lysine 455 contribute to the L-glutamate site. N-linked (GlcNAc...) asparagine glycosylation is present at asparagine 518. Helical transmembrane passes span serine 682–valine 704, leucine 719–serine 739, threonine 751–asparagine 769, valine 792–valine 812, histidine 836–valine 857, phenylalanine 871–threonine 893, and leucine 904–phenylalanine 929. Positions aspartate 975–leucine 999 are disordered. Residues lysine 984–serine 993 show a composition bias toward low complexity.

This sequence belongs to the G-protein coupled receptor 3 family.

The protein resides in the cell membrane. Its function is as follows. G-protein coupled receptor for glutamate. Ligand binding causes a conformation change that triggers signaling via guanine nucleotide-binding proteins (G proteins) and modulates the activity of down-stream effectors. This Caenorhabditis elegans protein is Probable metabotropic glutamate receptor mgl-1 (mgl-1).